We begin with the raw amino-acid sequence, 381 residues long: Protein pelota homolog (381 aa).

Belongs to the eukaryotic release factor 1 family. Pelota subfamily. As to quaternary structure, component of the Pelota-HBS1L complex, also named Dom34-Hbs1 complex, composed of pelo-1 and hbs-1. The cofactor is a divalent metal cation.

It localises to the cytoplasm. It is found in the nucleus. Its function is as follows. Component of the Pelota-HBS1L complex, a complex that recognizes stalled ribosomes and triggers the No-Go Decay (NGD) pathway. In the Pelota-HBS1L complex, pelo-1 recognizes ribosomes stalled at the 3' end of an mRNA and engages stalled ribosomes by destabilizing mRNA in the mRNA channel. Following ribosome-binding, the Pelota-HBS1L complex promotes the disassembly of stalled ribosomes, followed by degradation of damaged mRNAs as part of the NGD pathway. This is Protein pelota homolog from Caenorhabditis elegans.